Reading from the N-terminus, the 479-residue chain is uncharacterized protein (479 aa).

Transmembrane regions (helical) follow at residues 25-45, 63-83, 110-130, 133-153, 175-195, 229-249, 287-307, and 328-348; these read VVFV…LFFF, IAMI…LAGG, LFGP…TVIF, GVFN…AGIL, VLSI…VLGI, ILLY…IVWL, LILN…IAFI, and LFAP…LLLL.

It in the C-terminal section; belongs to the GatC family.

The protein localises to the cell membrane. This is an uncharacterized protein from Mycoplasma pneumoniae (strain ATCC 29342 / M129 / Subtype 1) (Mycoplasmoides pneumoniae).